A 111-amino-acid polypeptide reads, in one-letter code: uncharacterized protein (111 aa).

The helical transmembrane segment at 27–47 threads the bilayer; sequence HLFHFPSISFFFFFFFFFFSF.

The protein localises to the membrane. This is an uncharacterized protein from Saccharomyces cerevisiae (strain ATCC 204508 / S288c) (Baker's yeast).